Reading from the N-terminus, the 193-residue chain is Probable oligoribonuclease (193 aa).

Residues 15–177 (IIWIDCEMTG…DDIMESIAEL (163 aa)) form the Exonuclease domain. The active site involves Tyr-136.

The protein belongs to the oligoribonuclease family.

Functionally, 3'-to-5' exoribonuclease specific for small oligoribonucleotides. The protein is Probable oligoribonuclease of Caenorhabditis elegans.